Reading from the N-terminus, the 113-residue chain is uncharacterized protein (113 aa).

This is an uncharacterized protein from Schizosaccharomyces pombe (strain 972 / ATCC 24843) (Fission yeast).